Here is a 61-residue protein sequence, read N- to C-terminus: DNA-directed RNA polymerase subunit 12-like protein (61 aa).

Residues C21, C24, C38, and C41 each contribute to the Zn(2+) site.

Belongs to the archaeal Rpo12/eukaryotic RPC10 RNA polymerase subunit family.

It is found in the nucleus. The polypeptide is DNA-directed RNA polymerase subunit 12-like protein (NRPB12L) (Arabidopsis thaliana (Mouse-ear cress)).